The chain runs to 139 residues: Protein 2.8 (139 aa).

The sequence is that of Protein 2.8 from Escherichia phage T7 (Bacteriophage T7).